Consider the following 295-residue polypeptide: Protein PAR32 (295 aa).

Ala2 is subject to N-acetylalanine. A phosphoserine mark is found at Ser36, Ser39, Ser47, Ser123, Ser138, Ser141, and Ser147. Polar residues predominate over residues 134–153 (SATRSHQSLHATTSSPNNNA). Disordered regions lie at residues 134-156 (SATR…APIV) and 217-295 (TSKK…TMFN). Positions 217-227 (TSKKPKNKLKG) are enriched in basic residues. Position 246 is a phosphoserine (Ser246). Residues 246–256 (SPKSSRNTINH) show a composition bias toward polar residues. Basic and acidic residues predominate over residues 265–274 (KFNLKDDNGK). The segment covering 275 to 284 (EKKKKKKKKS) has biased composition (basic residues). A compositionally biased stretch (low complexity) spans 285–295 (GFFSSLKTMFN).

Post-translationally, hyperphosphorylated after treatment with rapamycin in a TAP42-dependent manner.

The protein localises to the cytoplasm. Its function is as follows. Involved in resistance to cisplatin. This chain is Protein PAR32 (PAR32), found in Saccharomyces cerevisiae (strain ATCC 204508 / S288c) (Baker's yeast).